We begin with the raw amino-acid sequence, 102 residues long: Colipase-like protein 2 (102 aa).

Residues 1-23 form the signal peptide; that stretch reads MAFTQALVTVLALLAGTLPHRHS. 5 disulfide bridges follow: cysteine 36-cysteine 47, cysteine 42-cysteine 58, cysteine 46-cysteine 80, cysteine 68-cysteine 88, and cysteine 82-cysteine 99.

The protein belongs to the colipase family.

It localises to the secreted. The sequence is that of Colipase-like protein 2 (Clpsl2) from Mus musculus (Mouse).